The chain runs to 527 residues: Peptide chain release factor 3 (527 aa).

One can recognise a tr-type G domain in the interval 9 to 277; the sequence is AKRRTFAIIS…AVVNWAPMPL (269 aa). GTP contacts are provided by residues 18-25, 86-90, and 140-143; these read SHPDAGKT, DTPGH, and NKLD.

The protein belongs to the TRAFAC class translation factor GTPase superfamily. Classic translation factor GTPase family. PrfC subfamily.

The protein resides in the cytoplasm. In terms of biological role, increases the formation of ribosomal termination complexes and stimulates activities of RF-1 and RF-2. It binds guanine nucleotides and has strong preference for UGA stop codons. It may interact directly with the ribosome. The stimulation of RF-1 and RF-2 is significantly reduced by GTP and GDP, but not by GMP. This is Peptide chain release factor 3 from Pseudomonas syringae pv. tomato (strain ATCC BAA-871 / DC3000).